The primary structure comprises 223 residues: Ribonuclease HII (223 aa).

The RNase H type-2 domain maps to 1 to 219 (MMIAGIDEAG…VENIREELEK (219 aa)). The a divalent metal cation site is built by Asp7, Glu8, and Asp105.

It belongs to the RNase HII family. Mn(2+) is required as a cofactor. Mg(2+) serves as cofactor.

The protein resides in the cytoplasm. It catalyses the reaction Endonucleolytic cleavage to 5'-phosphomonoester.. Its function is as follows. Endonuclease that specifically degrades the RNA of RNA-DNA hybrids. The polypeptide is Ribonuclease HII (Methanosarcina acetivorans (strain ATCC 35395 / DSM 2834 / JCM 12185 / C2A)).